The sequence spans 932 residues: DNA mismatch repair protein MutS (932 aa).

Residues 1-13 are compositionally biased toward acidic residues; the sequence is MTTDTDTDVDAGT. Residues 1–26 form a disordered region; the sequence is MTTDTDTDVDAGTDLEPQPEGPPEKM. An ATP-binding site is contributed by 648-655; that stretch reads GPNMSGKS. Residues 865-892 form a disordered region; that stretch reads NQQNQASDDDEIARSPRGADTNTDAGIN.

This sequence belongs to the DNA mismatch repair MutS family.

This protein is involved in the repair of mismatches in DNA. It is possible that it carries out the mismatch recognition step. This protein has a weak ATPase activity. This chain is DNA mismatch repair protein MutS, found in Haloquadratum walsbyi (strain DSM 16790 / HBSQ001).